Reading from the N-terminus, the 149-residue chain is Ribonuclease pancreatic (149 aa).

The first 25 residues, 1 to 25 (MGLENSLILFSLLVLVLGWVQPSLG), serve as a signal peptide directing secretion. A disordered region spans residues 25-62 (GKESSPDKFKRQHMDTEGSSKSSPTYCNQMRSPQEMTK). Positions 28–42 (SSPDKFKRQHMDTEG) are enriched in basic and acidic residues. Substrate contacts are provided by Lys-32 and Arg-35. The Proton acceptor role is filled by His-37. A compositionally biased stretch (polar residues) spans 43–61 (SSKSSPTYCNQMRSPQEMT). 4 disulfides stabilise this stretch: Cys-51–Cys-109, Cys-65–Cys-120, Cys-83–Cys-135, and Cys-90–Cys-97. Substrate-binding positions include 66–70 (KPVNT) and Lys-91. His-144 serves as the catalytic Proton donor.

This sequence belongs to the pancreatic ribonuclease family. As to quaternary structure, monomer. Interacts with and forms tight 1:1 complexes with RNH1. Dimerization of two such complexes may occur. Interaction with RNH1 inhibits this protein.

It localises to the secreted. The catalysed reaction is an [RNA] containing cytidine + H2O = an [RNA]-3'-cytidine-3'-phosphate + a 5'-hydroxy-ribonucleotide-3'-[RNA].. The enzyme catalyses an [RNA] containing uridine + H2O = an [RNA]-3'-uridine-3'-phosphate + a 5'-hydroxy-ribonucleotide-3'-[RNA].. Its function is as follows. Endonuclease that catalyzes the cleavage of RNA on the 3' side of pyrimidine nucleotides. Acts on single-stranded and double-stranded RNA. In Sundamys muelleri (Mueller's giant sunda rat), this protein is Ribonuclease pancreatic (RNASE1).